The following is a 171-amino-acid chain: Probable deoxyuridine 5'-triphosphate nucleotidohydrolase (171 aa).

It belongs to the dCTP deaminase family. Archaeal dUTPase subfamily.

The enzyme catalyses dUTP + H2O = dUMP + diphosphate + H(+). The protein operates within pyrimidine metabolism; dUMP biosynthesis; dUMP from dCTP (dUTP route): step 2/2. Its function is as follows. This enzyme is involved in nucleotide metabolism: it produces dUMP, the immediate precursor of thymidine nucleotides and it decreases the intracellular concentration of dUTP so that uracil cannot be incorporated into DNA. The sequence is that of Probable deoxyuridine 5'-triphosphate nucleotidohydrolase from Methanosarcina mazei (strain ATCC BAA-159 / DSM 3647 / Goe1 / Go1 / JCM 11833 / OCM 88) (Methanosarcina frisia).